Reading from the N-terminus, the 580-residue chain is 2-succinyl-5-enolpyruvyl-6-hydroxy-3-cyclohexene-1-carboxylate synthase (580 aa).

It belongs to the TPP enzyme family. MenD subfamily. In terms of assembly, homodimer. Mg(2+) serves as cofactor. It depends on Mn(2+) as a cofactor. The cofactor is thiamine diphosphate.

The enzyme catalyses isochorismate + 2-oxoglutarate + H(+) = 5-enolpyruvoyl-6-hydroxy-2-succinyl-cyclohex-3-ene-1-carboxylate + CO2. It participates in quinol/quinone metabolism; 1,4-dihydroxy-2-naphthoate biosynthesis; 1,4-dihydroxy-2-naphthoate from chorismate: step 2/7. Its pathway is quinol/quinone metabolism; menaquinone biosynthesis. Functionally, catalyzes the thiamine diphosphate-dependent decarboxylation of 2-oxoglutarate and the subsequent addition of the resulting succinic semialdehyde-thiamine pyrophosphate anion to isochorismate to yield 2-succinyl-5-enolpyruvyl-6-hydroxy-3-cyclohexene-1-carboxylate (SEPHCHC). In Bacillus pumilus (strain SAFR-032), this protein is 2-succinyl-5-enolpyruvyl-6-hydroxy-3-cyclohexene-1-carboxylate synthase.